Consider the following 278-residue polypeptide: MKIRERFSMVDLPVLIITAAIIGHDKYKAFHAGANDILQKPYHYSEFMARIQNLIMMKHTANQATRMEMAFLQSQIKPHFLYNVLNTIISLTHLDIEKAREVTEEFTNYLRMSFDFQNTSAISSFRHELSIINSYLSIEKTRFSNRLEVLFDIDEDIDFILPPLMIQPLVENAVLHGVSKKRGGGWIKLTAKKQSKNEYHIKVEDNGPGITPEKQIDLLSTDFDRSVGLKNINQRLKHFCGSELMISSTPDAGTSVSMLIHLAETTGSPKELKDTERT.

The region spanning 1–55 (MKIRERFSMVDLPVLIITAAIIGHDKYKAFHAGANDILQKPYHYSEFMARIQNLI) is the Response regulatory domain.

This is an uncharacterized protein from Bacillus subtilis (strain 168).